The chain runs to 267 residues: tRNA pseudouridine synthase A (267 aa).

Asp54 acts as the Nucleophile in catalysis. Tyr114 is a binding site for substrate.

This sequence belongs to the tRNA pseudouridine synthase TruA family. Homodimer.

The catalysed reaction is uridine(38/39/40) in tRNA = pseudouridine(38/39/40) in tRNA. In terms of biological role, formation of pseudouridine at positions 38, 39 and 40 in the anticodon stem and loop of transfer RNAs. The polypeptide is tRNA pseudouridine synthase A (Tropheryma whipplei (strain TW08/27) (Whipple's bacillus)).